We begin with the raw amino-acid sequence, 466 residues long: Ribulose bisphosphate carboxylase large chain (466 aa).

Lys-5 carries the N6,N6,N6-trimethyllysine modification. Positions 114 and 164 each coordinate substrate. Lys-166 serves as the catalytic Proton acceptor. Lys-168 is a binding site for substrate. Positions 192, 194, and 195 each coordinate Mg(2+). Lys-192 is modified (N6-carboxylysine). His-285 (proton acceptor) is an active-site residue. Residues Arg-286, His-318, and Ser-370 each coordinate substrate.

It belongs to the RuBisCO large chain family. Type I subfamily. In terms of assembly, heterohexadecamer of 8 large chains and 8 small chains; disulfide-linked. The disulfide link is formed within the large subunit homodimers. Mg(2+) serves as cofactor. In terms of processing, the disulfide bond which can form in the large chain dimeric partners within the hexadecamer appears to be associated with oxidative stress and protein turnover.

It localises to the plastid. It is found in the chloroplast. The catalysed reaction is 2 (2R)-3-phosphoglycerate + 2 H(+) = D-ribulose 1,5-bisphosphate + CO2 + H2O. It carries out the reaction D-ribulose 1,5-bisphosphate + O2 = 2-phosphoglycolate + (2R)-3-phosphoglycerate + 2 H(+). Functionally, ruBisCO catalyzes two reactions: the carboxylation of D-ribulose 1,5-bisphosphate, the primary event in carbon dioxide fixation, as well as the oxidative fragmentation of the pentose substrate in the photorespiration process. Both reactions occur simultaneously and in competition at the same active site. This chain is Ribulose bisphosphate carboxylase large chain, found in Asarum canadense (Wild ginger).